The chain runs to 141 residues: Nucleoside diphosphate kinase (141 aa).

ATP is bound by residues lysine 11, phenylalanine 59, arginine 87, threonine 93, arginine 104, and asparagine 114. The active-site Pros-phosphohistidine intermediate is the histidine 117.

The protein belongs to the NDK family. In terms of assembly, homotetramer. Mg(2+) is required as a cofactor.

It is found in the cytoplasm. The catalysed reaction is a 2'-deoxyribonucleoside 5'-diphosphate + ATP = a 2'-deoxyribonucleoside 5'-triphosphate + ADP. It carries out the reaction a ribonucleoside 5'-diphosphate + ATP = a ribonucleoside 5'-triphosphate + ADP. Its function is as follows. Major role in the synthesis of nucleoside triphosphates other than ATP. The ATP gamma phosphate is transferred to the NDP beta phosphate via a ping-pong mechanism, using a phosphorylated active-site intermediate. The polypeptide is Nucleoside diphosphate kinase (Polynucleobacter necessarius subsp. necessarius (strain STIR1)).